The primary structure comprises 110 residues: Large ribosomal subunit protein uL22 (110 aa).

Belongs to the universal ribosomal protein uL22 family. In terms of assembly, part of the 50S ribosomal subunit.

This protein binds specifically to 23S rRNA; its binding is stimulated by other ribosomal proteins, e.g. L4, L17, and L20. It is important during the early stages of 50S assembly. It makes multiple contacts with different domains of the 23S rRNA in the assembled 50S subunit and ribosome. Its function is as follows. The globular domain of the protein is located near the polypeptide exit tunnel on the outside of the subunit, while an extended beta-hairpin is found that lines the wall of the exit tunnel in the center of the 70S ribosome. The chain is Large ribosomal subunit protein uL22 from Leptospira interrogans serogroup Icterohaemorrhagiae serovar copenhageni (strain Fiocruz L1-130).